The following is a 258-amino-acid chain: Tryptophan synthase alpha chain (258 aa).

Catalysis depends on proton acceptor residues glutamate 44 and aspartate 55.

Belongs to the TrpA family. As to quaternary structure, tetramer of two alpha and two beta chains.

It carries out the reaction (1S,2R)-1-C-(indol-3-yl)glycerol 3-phosphate + L-serine = D-glyceraldehyde 3-phosphate + L-tryptophan + H2O. Its pathway is amino-acid biosynthesis; L-tryptophan biosynthesis; L-tryptophan from chorismate: step 5/5. Its function is as follows. The alpha subunit is responsible for the aldol cleavage of indoleglycerol phosphate to indole and glyceraldehyde 3-phosphate. The sequence is that of Tryptophan synthase alpha chain from Petrotoga mobilis (strain DSM 10674 / SJ95).